The primary structure comprises 354 residues: Nicotinate-nucleotide--dimethylbenzimidazole phosphoribosyltransferase (354 aa).

Glutamate 319 acts as the Proton acceptor in catalysis.

The protein belongs to the CobT family.

The enzyme catalyses 5,6-dimethylbenzimidazole + nicotinate beta-D-ribonucleotide = alpha-ribazole 5'-phosphate + nicotinate + H(+). It functions in the pathway nucleoside biosynthesis; alpha-ribazole biosynthesis; alpha-ribazole from 5,6-dimethylbenzimidazole: step 1/2. Catalyzes the synthesis of alpha-ribazole-5'-phosphate from nicotinate mononucleotide (NAMN) and 5,6-dimethylbenzimidazole (DMB). The sequence is that of Nicotinate-nucleotide--dimethylbenzimidazole phosphoribosyltransferase from Pelodictyon phaeoclathratiforme (strain DSM 5477 / BU-1).